A 124-amino-acid chain; its full sequence is Fluoride-specific ion channel FluC (124 aa).

Transmembrane regions (helical) follow at residues 5–27 (LFVALGGSIGAVLRYLISILMLQ), 42–62 (ILGSFLMGVVYALGQVSEVSP), 63–83 (EIKAFIGVGMLGALTTFSTFS), and 95–115 (LVKAILNVVVNVGVCIFVVYL). Glycine 74 and threonine 77 together coordinate Na(+).

It belongs to the fluoride channel Fluc/FEX (TC 1.A.43) family.

Its subcellular location is the cell inner membrane. The enzyme catalyses fluoride(in) = fluoride(out). Na(+) is not transported, but it plays an essential structural role and its presence is essential for fluoride channel function. Fluoride-specific ion channel. Important for reducing fluoride concentration in the cell, thus reducing its toxicity. In Shewanella piezotolerans (strain WP3 / JCM 13877), this protein is Fluoride-specific ion channel FluC.